The chain runs to 196 residues: ATP-dependent Clp protease proteolytic subunit (196 aa).

Ser-96 (nucleophile) is an active-site residue. His-121 is a catalytic residue.

The protein belongs to the peptidase S14 family. Fourteen ClpP subunits assemble into 2 heptameric rings which stack back to back to give a disk-like structure with a central cavity, resembling the structure of eukaryotic proteasomes.

The protein localises to the cytoplasm. The enzyme catalyses Hydrolysis of proteins to small peptides in the presence of ATP and magnesium. alpha-casein is the usual test substrate. In the absence of ATP, only oligopeptides shorter than five residues are hydrolyzed (such as succinyl-Leu-Tyr-|-NHMec, and Leu-Tyr-Leu-|-Tyr-Trp, in which cleavage of the -Tyr-|-Leu- and -Tyr-|-Trp bonds also occurs).. Its function is as follows. Cleaves peptides in various proteins in a process that requires ATP hydrolysis. Has a chymotrypsin-like activity. Plays a major role in the degradation of misfolded proteins. The polypeptide is ATP-dependent Clp protease proteolytic subunit (Streptococcus pneumoniae (strain ATCC 700669 / Spain 23F-1)).